The chain runs to 524 residues: Metalloendopeptidase OMA1, mitochondrial (524 aa).

The transit peptide at 1–13 (MSFICGLQSAARN) directs the protein to the mitochondrion. A propeptide spanning residues 14-143 (HVFFRFNSLS…RNFHTSPRFQ (130 aa)) is cleaved from the precursor. Residues 144–195 (AAPVPLLLMILKPVQKLFAIIVGRGIRKWWQALPPNKKEVVKENIRKNKWKL) are Mitochondrial matrix-facing. The tract at residues 148 to 167 (PLLLMILKPVQKLFAIIVGR) is cardiolipin-binding. Positions 165-195 (VGRGIRKWWQALPPNKKEVVKENIRKNKWKL) are stress-sensor region. Residues 196–216 (FLGLSSFGLLFVVFYFTHLEV) form a helical membrane-spanning segment. H327 is a Zn(2+) binding site. The active site involves E328. The Zn(2+) site is built by H331 and E392. C407 and C465 are oxidised to a cystine.

Belongs to the peptidase M48 family. Homooligomer. Zn(2+) serves as cofactor. Post-translationally, may form a redox-dependent disulfide bond. Exists in a semi-oxidized state and is activated by prolonged hypoxia. Autocatalytically cleaved in response to mitochondrial depolarization both at the N-terminus and C-terminus to generate the short active form (S-OMA1). Autocatalytic processing at the C-terminus takes place at residues 447-456. The S-OMA1 form is unstable. OMA1 pre-processing by AFG3L2 may participate in maturation before OMA1 autocatalytic cleavage. Degraded by YMEL1 in response to membrane depolarization. Protein turnover is regulated by prohibitin (PHB and PHB2), which promotes degradation of OMA1 in a cardiolipin-binding manner. In terms of tissue distribution, widely expressed, with strong expression in the heart, skeletal muscle, kidney and liver.

The protein resides in the mitochondrion inner membrane. Its activity is regulated as follows. Protease activity is activated upon autocatalytic cleavage in response to mitochondrial depolarization. Functionally, metalloprotease that is part of the quality control system in the inner membrane of mitochondria. Activated in response to various mitochondrial stress, leading to the proteolytic cleavage of target proteins, such as OPA1, UQCC3 and DELE1. Involved in the fusion of the mitochondrial inner membranes by mediating cleavage of OPA1 at S1 position, generating the soluble OPA1 (S-OPA1), which cooperates with the membrane form (L-OPA1) to coordinate the fusion of mitochondrial inner membranes. Following stress conditions that induce loss of mitochondrial membrane potential, mediates cleavage of OPA1, leading to excess production of soluble OPA1 (S-OPA1) and negative regulation of mitochondrial fusion. Involved in mitochondrial safeguard in response to transient mitochondrial membrane depolarization (flickering) by catalyzing cleavage of OPA1, leading to excess production of S-OPA1, preventing mitochondrial hyperfusion. Also acts as a regulator of apoptosis: upon BAK and BAX aggregation, mediates cleavage of OPA1, leading to the remodeling of mitochondrial cristae and allowing the release of cytochrome c from mitochondrial cristae. In depolarized mitochondria, may also act as a backup protease for PINK1 by mediating PINK1 cleavage and promoting its subsequent degradation by the proteasome. May also cleave UQCC3 in response to mitochondrial depolarization. Also acts as an activator of the integrated stress response (ISR): in response to mitochondrial stress, mediates cleavage of DELE1 to generate the processed form of DELE1 (S-DELE1), which translocates to the cytosol and activates EIF2AK1/HRI to trigger the ISR. Its role in mitochondrial quality control is essential for regulating lipid metabolism as well as to maintain body temperature and energy expenditure under cold-stress conditions. Binds cardiolipin, possibly regulating its protein turnover. Required for the stability of the respiratory supercomplexes. In Homo sapiens (Human), this protein is Metalloendopeptidase OMA1, mitochondrial.